A 472-amino-acid polypeptide reads, in one-letter code: Glutamyl-tRNA(Gln) amidotransferase subunit A (472 aa).

Catalysis depends on charge relay system residues K69 and S144. Residue S168 is the Acyl-ester intermediate of the active site.

This sequence belongs to the amidase family. GatA subfamily. As to quaternary structure, heterotrimer of A, B and C subunits.

It catalyses the reaction L-glutamyl-tRNA(Gln) + L-glutamine + ATP + H2O = L-glutaminyl-tRNA(Gln) + L-glutamate + ADP + phosphate + H(+). Allows the formation of correctly charged Gln-tRNA(Gln) through the transamidation of misacylated Glu-tRNA(Gln) in organisms which lack glutaminyl-tRNA synthetase. The reaction takes place in the presence of glutamine and ATP through an activated gamma-phospho-Glu-tRNA(Gln). This Sulfurisphaera tokodaii (strain DSM 16993 / JCM 10545 / NBRC 100140 / 7) (Sulfolobus tokodaii) protein is Glutamyl-tRNA(Gln) amidotransferase subunit A.